Reading from the N-terminus, the 105-residue chain is MKPTLCFLFILVSLFPLIVPGNAQCSFESLVDQRIKEALSRQEPKTISCTSVTSSGRLASCPAGMVVTGCACGYGCGSWDIRNGNTCHCQCSVMDWASARCCRMA.

A signal peptide spans 1 to 23 (MKPTLCFLFILVSLFPLIVPGNA). 5 disulfide bridges follow: cysteine 49/cysteine 102, cysteine 61/cysteine 101, cysteine 70/cysteine 87, cysteine 72/cysteine 89, and cysteine 76/cysteine 91.

It belongs to the resistin/FIZZ family. In terms of assembly, homodimer; disulfide-linked. Heterodimer with RETNLG. As to expression, strongly expressed in colon, and at lower levels in ileum. In colon, found throughout the crypt and surface epithelium and in goblet cells (at protein level). Specific to the gastrointestinal tract; not detected in other tissues tested.

The protein resides in the secreted. In terms of biological role, probable hormone. The polypeptide is Resistin-like beta (Retnlb) (Mus musculus (Mouse)).